The sequence spans 318 residues: Probable aminopeptidase YbaC (318 aa).

The active-site Nucleophile is S115. The active site involves D266. H296 (proton donor) is an active-site residue.

This sequence belongs to the peptidase S33 family.

In terms of biological role, probable aminopeptidase. The sequence is that of Probable aminopeptidase YbaC (ybaC) from Bacillus subtilis (strain 168).